The chain runs to 104 residues: Glutaredoxin-C15 (104 aa).

In terms of domain architecture, Glutaredoxin spans 1-103 (MERVAKLSTE…PMLKAAGAIW (103 aa)). Cys-21 and Cys-24 form a disulfide bridge.

It belongs to the glutaredoxin family. CC-type subfamily.

The protein resides in the cytoplasm. In terms of biological role, has a glutathione-disulfide oxidoreductase activity in the presence of NADPH and glutathione reductase. Reduces low molecular weight disulfides and proteins. The chain is Glutaredoxin-C15 (GRXC15) from Oryza sativa subsp. japonica (Rice).